A 1063-amino-acid polypeptide reads, in one-letter code: Probable hemoglobin and hemoglobin-haptoglobin-binding protein 1 (1063 aa).

The N-terminal stretch at 1–24 (MTNFKFSLLACSIAFALNASIAYA) is a signal peptide. Tandem repeats lie at residues 26–29 (QPTN), 30–33 (QPTN), 34–37 (QPTN), 38–41 (QPTN), 42–45 (QPTN), 46–49 (QPTN), and 50–53 (QPTN). Positions 26–53 (QPTNQPTNQPTNQPTNQPTNQPTNQPTN) are 7 X 4 AA tandem repeats of Q-P-T-N. Positions 28–55 (TNQPTNQPTNQPTNQPTNQPTNQPTNQN) are enriched in low complexity. Residues 28–57 (TNQPTNQPTNQPTNQPTNQPTNQPTNQNSN) form a disordered region. The TonB box motif lies at 63–70 (EQINVSGS). A TBDR plug domain is found at 66–200 (NVSGSSENIN…LGGSVIFETK (135 aa)). In terms of domain architecture, TBDR beta-barrel spans 208–1063 (DKDYYLSYKR…NYRMSVQFEF (856 aa)). The TonB C-terminal box motif lies at 1046 to 1063 (NRFYAPGRNYRMSVQFEF).

It belongs to the TonB-dependent receptor family. Hemoglobin/haptoglobin binding protein subfamily.

The protein localises to the cell outer membrane. Functionally, acts as a receptor for hemoglobin or the hemoglobin/haptoglobin complex of the human host and is required for heme uptake. This Haemophilus influenzae (strain ATCC 51907 / DSM 11121 / KW20 / Rd) protein is Probable hemoglobin and hemoglobin-haptoglobin-binding protein 1.